A 152-amino-acid polypeptide reads, in one-letter code: Transcriptional regulator MraZ (152 aa).

SpoVT-AbrB domains follow at residues 5-52 and 81-124; these read ATLV…PLPE and ASEC…DETT.

The protein belongs to the MraZ family. As to quaternary structure, forms oligomers.

The protein localises to the cytoplasm. The protein resides in the nucleoid. In terms of biological role, negatively regulates its own expression and that of the subsequent genes in the proximal part of the division and cell wall (dcw) gene cluster. Acts by binding directly to DNA. May also regulate the expression of genes outside the dcw cluster. The sequence is that of Transcriptional regulator MraZ from Shigella sonnei (strain Ss046).